We begin with the raw amino-acid sequence, 51 residues long: Mating pheromone Er-23 (51 aa).

5 cysteine pairs are disulfide-bonded: Cys-3–Cys-24, Cys-6–Cys-16, Cys-13–Cys-47, Cys-27–Cys-40, and Cys-35–Cys-51.

It localises to the secreted. Mating ciliate pheromones (or gamones) are diffusible extracellular communication signals that distinguish different intraspecific classes of cells commonly referred to as 'mating types'. They prepare the latter for conjugation by changing their cell surface properties. In Euplotes raikovi, this protein is Mating pheromone Er-23 (MAT23).